Here is a 457-residue protein sequence, read N- to C-terminus: MKTKFCTGGEAEPSPLGLLLSCGSGSAAPAPGVGQQRDAASDLESKQLGGQQPPLALPPPPPLPLPLPLPQPPPPQPPADEQPEPRTRRRAYLWCKEFLPGAWRGLREDEFHISVIRGGLSNMLFQCSLPDTTATLGDEPRKVLLRLYGAILQMRSCNKEGSEQAQKENEFQGAEAMVLESVMFAILAERSLGPKLYGIFPQGRLEQFIPSRRLDTEELSLPDISAEIAEKMATFHGMKMPFNKEPKWLFGTMEKYLKEVLRIKFTEESRIKKLHKLLSYNLPLELENLRSLLESTPSPVVFCHNDCQEGNILLLEGRENSEKQKLMLIDFEYSSYNYRGFDIGNHFCEWMYDYSYEKYPFFRANIRKYPTKKQQLHFISSYLPAFQNDFENLSTEEKSIIKEEMLLEVNRFALASHFLWGLWSIVQAKISSIEFGYMDYAQARFDAYFHQKRKLGV.

The interval 1–86 (MKTKFCTGGE…PPADEQPEPR (86 aa)) is disordered. Residues 13 to 32 (PSPLGLLLSCGSGSAAPAPG) are compositionally biased toward low complexity. Residues 55 to 80 (LALPPPPPLPLPLPLPQPPPPQPPAD) show a composition bias toward pro residues. Residues 117–123 (RGGLSNM), R146, and 207–213 (QFIPSRR) each bind ATP. 119–121 (GLS) provides a ligand contact to phosphocholine. Residue K247 is modified to N6-acetyllysine. S279 carries the phosphoserine modification. Residues Q308 and D330 each contribute to the ATP site.

The protein belongs to the choline/ethanolamine kinase family. As to quaternary structure, homodimer. Heterodimer with CHKB. Monomer; acetylation by KAT5 promotes dissociation of the homodimer and monomerization. In terms of assembly, (Microbial infection) Interacts with PI4KA/PI4KIIIalpha; CHKA bridges PI4KA/PI4KIIIalpha and hepatitis C virus (HCV) non-structural protein 5A (NS5A) and potentiates NS5A-stimulated PI4KA activity, which then facilitates the targeting of the ternary complex to the ER for viral replication. Phosphorylated at Ser-279 by AMPK in response to glucose deprivation, leading to localization to lipid droplets. In terms of processing, acetylated by KAT5 at Lys-247 following phosphorylation by AMPK, leading to monomerization and conversion into a tyrosine-protein kinase.

The protein resides in the cytoplasm. Its subcellular location is the cytosol. It is found in the lipid droplet. It carries out the reaction choline + ATP = phosphocholine + ADP + H(+). The catalysed reaction is ethanolamine + ATP = phosphoethanolamine + ADP + H(+). The enzyme catalyses L-tyrosyl-[protein] + ATP = O-phospho-L-tyrosyl-[protein] + ADP + H(+). The protein operates within phospholipid metabolism; phosphatidylcholine biosynthesis; phosphocholine from choline: step 1/1. It functions in the pathway phospholipid metabolism; phosphatidylethanolamine biosynthesis; phosphatidylethanolamine from ethanolamine: step 1/3. Homodimerization or heterodimerization is required for the choline and ethanolamine kinase activities. In terms of biological role, plays a key role in phospholipid biosynthesis by catalyzing the phosphorylation of free choline to phosphocholine, the first step in phosphatidylcholine biosynthesis. Also phosphorylates ethanolamine, thereby contributing to phosphatidylethanolamine biosynthesis. Has higher activity with choline. May contribute to tumor cell growth. This isoform plays a key role in lipolysis of lipid droplets following glucose deprivation. In response to glucose deprivation, phosphorylated by AMPK, promoting localization to lipid droplets. Phosphorylation is followed by acetylation by KAT5, leading to dissociation of the homodimer into a monomer. Monomeric CHKA isoform 1 is converted into a tyrosine-protein kinase, which phosphorylates lipid droplet structural proteins PLIN2 and PLIN3, leading to lipolysis of lipid droplets. In Homo sapiens (Human), this protein is Choline kinase alpha (CHKA).